The following is a 348-amino-acid chain: Small ribosomal subunit biogenesis GTPase RsgA (348 aa).

Residues 1 to 32 (MAKQKLTQNQKRRIHSNNAKALDRHRRQTKKQ) are disordered. One can recognise a CP-type G domain in the interval 106 to 274 (KNELSRPDYY…LIDSPGIREF (169 aa)). Residues 162–165 (NKID) and 216–224 (GQSGVGKSS) contribute to the GTP site. Zn(2+) contacts are provided by Cys298, Cys303, His305, and Cys311.

Belongs to the TRAFAC class YlqF/YawG GTPase family. RsgA subfamily. In terms of assembly, monomer. Associates with 30S ribosomal subunit, binds 16S rRNA. Zn(2+) is required as a cofactor.

It is found in the cytoplasm. Its function is as follows. One of several proteins that assist in the late maturation steps of the functional core of the 30S ribosomal subunit. Helps release RbfA from mature subunits. May play a role in the assembly of ribosomal proteins into the subunit. Circularly permuted GTPase that catalyzes slow GTP hydrolysis, GTPase activity is stimulated by the 30S ribosomal subunit. This is Small ribosomal subunit biogenesis GTPase RsgA from Actinobacillus succinogenes (strain ATCC 55618 / DSM 22257 / CCUG 43843 / 130Z).